Consider the following 268-residue polypeptide: UDP-2,3-diacylglucosamine hydrolase (268 aa).

Positions 25, 27, 58, 97, and 132 each coordinate Mn(2+). Residue 97–98 (NR) participates in substrate binding. Substrate-binding residues include Asp-140, Ser-178, Glu-191, and His-222. Mn(2+) contacts are provided by His-222 and His-224.

It belongs to the LpxH family. The cofactor is Mn(2+).

It is found in the cell inner membrane. It carries out the reaction UDP-2-N,3-O-bis[(3R)-3-hydroxytetradecanoyl]-alpha-D-glucosamine + H2O = 2-N,3-O-bis[(3R)-3-hydroxytetradecanoyl]-alpha-D-glucosaminyl 1-phosphate + UMP + 2 H(+). Its pathway is glycolipid biosynthesis; lipid IV(A) biosynthesis; lipid IV(A) from (3R)-3-hydroxytetradecanoyl-[acyl-carrier-protein] and UDP-N-acetyl-alpha-D-glucosamine: step 4/6. Its function is as follows. Hydrolyzes the pyrophosphate bond of UDP-2,3-diacylglucosamine to yield 2,3-diacylglucosamine 1-phosphate (lipid X) and UMP by catalyzing the attack of water at the alpha-P atom. Involved in the biosynthesis of lipid A, a phosphorylated glycolipid that anchors the lipopolysaccharide to the outer membrane of the cell. The polypeptide is UDP-2,3-diacylglucosamine hydrolase (Ralstonia nicotianae (strain ATCC BAA-1114 / GMI1000) (Ralstonia solanacearum)).